The sequence spans 250 residues: Insertion sequence IS232 putative ATP-binding protein (250 aa).

108–115 (GPSGVGKT) contacts ATP.

The protein belongs to the IS21/IS1162 putative ATP-binding protein family.

The protein is Insertion sequence IS232 putative ATP-binding protein of Bacillus thuringiensis subsp. berliner.